We begin with the raw amino-acid sequence, 1031 residues long: Protein translocase subunit SecA (1031 aa).

ATP contacts are provided by residues glutamine 143, 161–165 (GEGKT), and aspartate 661. Over residues 963 to 973 (KERLVAKHEES) the composition is skewed to basic and acidic residues. Positions 963–1031 (KERLVAKHEE…GKKYKNCCGR (69 aa)) are disordered. Residues cysteine 1017, cysteine 1019, cysteine 1028, and cysteine 1029 each coordinate Zn(2+).

Belongs to the SecA family. Monomer and homodimer. Part of the essential Sec protein translocation apparatus which comprises SecA, SecYEG and auxiliary proteins SecDF. Other proteins may also be involved. Requires Zn(2+) as cofactor.

The protein resides in the cell inner membrane. It localises to the cytoplasm. The enzyme catalyses ATP + H2O + cellular proteinSide 1 = ADP + phosphate + cellular proteinSide 2.. Its function is as follows. Part of the Sec protein translocase complex. Interacts with the SecYEG preprotein conducting channel. Has a central role in coupling the hydrolysis of ATP to the transfer of proteins into and across the cell membrane, serving as an ATP-driven molecular motor driving the stepwise translocation of polypeptide chains across the membrane. In Prosthecochloris aestuarii (strain DSM 271 / SK 413), this protein is Protein translocase subunit SecA.